The primary structure comprises 1141 residues: Eukaryotic translation initiation factor 3 subunit A (1141 aa).

The PCI domain occupies 319–501 (LQRMAAHVLL…NSIYFGTDLT (183 aa)). 2 stretches are compositionally biased toward basic and acidic residues: residues 588–623 (QNNA…EERE) and 829–899 (AAEE…RGGD). Disordered stretches follow at residues 588-631 (QNNA…QNEI) and 829-1141 (AAEE…VKRR). Position 908 is a phosphoserine (S908). 4 stretches are compositionally biased toward basic and acidic residues: residues 920–976 (ERND…EPDT), 990–1051 (SRDD…EPQR), 1059–1087 (DAPR…RGDQ), and 1110–1131 (TREE…KAGD).

The protein belongs to the eIF-3 subunit A family. As to quaternary structure, component of the eukaryotic translation initiation factor 3 (eIF-3) complex. The eIF-3 complex interacts with pix.

It localises to the cytoplasm. RNA-binding component of the eukaryotic translation initiation factor 3 (eIF-3) complex, which is involved in protein synthesis of a specialized repertoire of mRNAs and, together with other initiation factors, stimulates binding of mRNA and methionyl-tRNAi to the 40S ribosome. The eIF-3 complex specifically targets and initiates translation of a subset of mRNAs involved in cell proliferation. This Drosophila simulans (Fruit fly) protein is Eukaryotic translation initiation factor 3 subunit A.